The chain runs to 54 residues: uncharacterized protein (54 aa).

A signal peptide spans 1-23; sequence MKELIFFLLIIVILFVVFMVVSS.

This is an uncharacterized protein from Acheta domesticus (House cricket).